A 116-amino-acid chain; its full sequence is NAD(P)H-quinone oxidoreductase subunit M (116 aa).

This sequence belongs to the complex I NdhM subunit family. NDH-1 can be composed of about 15 different subunits; different subcomplexes with different compositions have been identified which probably have different functions.

The protein localises to the cellular thylakoid membrane. It catalyses the reaction a plastoquinone + NADH + (n+1) H(+)(in) = a plastoquinol + NAD(+) + n H(+)(out). The enzyme catalyses a plastoquinone + NADPH + (n+1) H(+)(in) = a plastoquinol + NADP(+) + n H(+)(out). NDH-1 shuttles electrons from an unknown electron donor, via FMN and iron-sulfur (Fe-S) centers, to quinones in the respiratory and/or the photosynthetic chain. The immediate electron acceptor for the enzyme in this species is believed to be plastoquinone. Couples the redox reaction to proton translocation, and thus conserves the redox energy in a proton gradient. Cyanobacterial NDH-1 also plays a role in inorganic carbon-concentration. The polypeptide is NAD(P)H-quinone oxidoreductase subunit M (Synechococcus sp. (strain RCC307)).